We begin with the raw amino-acid sequence, 65 residues long: Carboxypeptidase A inhibitor (65 aa).

This sequence belongs to the protease inhibitor I44 family.

The protein localises to the secreted. Inhibits carboxypeptidase A. This Ascaris suum (Pig roundworm) protein is Carboxypeptidase A inhibitor.